Reading from the N-terminus, the 320-residue chain is Aspartate carbamoyltransferase catalytic subunit (320 aa).

Carbamoyl phosphate is bound by residues Arg-70 and Thr-71. Lys-98 is a binding site for L-aspartate. Arg-120, His-150, and Gln-153 together coordinate carbamoyl phosphate. Arg-184 and Arg-239 together coordinate L-aspartate. Residues Gly-280 and Pro-281 each coordinate carbamoyl phosphate.

It belongs to the aspartate/ornithine carbamoyltransferase superfamily. ATCase family. As to quaternary structure, heterododecamer (2C3:3R2) of six catalytic PyrB chains organized as two trimers (C3), and six regulatory PyrI chains organized as three dimers (R2).

The catalysed reaction is carbamoyl phosphate + L-aspartate = N-carbamoyl-L-aspartate + phosphate + H(+). It functions in the pathway pyrimidine metabolism; UMP biosynthesis via de novo pathway; (S)-dihydroorotate from bicarbonate: step 2/3. Catalyzes the condensation of carbamoyl phosphate and aspartate to form carbamoyl aspartate and inorganic phosphate, the committed step in the de novo pyrimidine nucleotide biosynthesis pathway. The chain is Aspartate carbamoyltransferase catalytic subunit from Xylella fastidiosa (strain Temecula1 / ATCC 700964).